The sequence spans 511 residues: Alpha-amylase 1A (511 aa).

The signal sequence occupies residues 1–15 (MKLFWLLFTIGFCWA). Q16 carries the post-translational modification Pyrrolidone carboxylic acid. Disulfide bonds link C43–C101, C85–C130, and C156–C175. The Ca(2+) site is built by N115, R173, and D182. Chloride is bound at residue R210. The active-site Nucleophile is the D212. Residue H216 participates in Ca(2+) binding. Residue E248 is the Proton donor of the active site. Chloride-binding residues include N313 and R352. Deamidated asparagine; partial is present on N365. A disulfide bridge links C393 with C399. N427 bears the Deamidated asparagine; partial; alternate mark. N427 carries an N-linked (GlcNAc...) asparagine glycan. An intrachain disulfide couples C465 to C477. N474 is subject to Deamidated asparagine; partial. Residue N476 is glycosylated (N-linked (GlcNAc...) asparagine).

The protein belongs to the glycosyl hydrolase 13 family. In terms of assembly, monomer. Requires Ca(2+) as cofactor. It depends on chloride as a cofactor.

It is found in the secreted. The catalysed reaction is Endohydrolysis of (1-&gt;4)-alpha-D-glucosidic linkages in polysaccharides containing three or more (1-&gt;4)-alpha-linked D-glucose units.. Functionally, calcium-binding enzyme that initiates starch digestion in the oral cavity. Catalyzes the hydrolysis of internal (1-&gt;4)-alpha-D-glucosidic bonds, yielding a mixture of maltose, isomaltose, small amounts of glucose as well as small linear and branched oligosaccharides called dextrins. In Homo sapiens (Human), this protein is Alpha-amylase 1A.